Reading from the N-terminus, the 247-residue chain is Centromere protein H (247 aa).

Met1 is modified (N-acetylmethionine). The segment covering 1-14 (MEEQPQMQDADEPA) has biased composition (acidic residues). The disordered stretch occupies residues 1–34 (MEEQPQMQDADEPADSGGEGRAGGPPQVAGAQAA). Ser16 carries the phosphoserine modification. Positions 24–34 (GPPQVAGAQAA) are enriched in low complexity. The stretch at 47 to 192 (RAQTKQQLLE…KIDLDSMENS (146 aa)) forms a coiled coil. Lys67 is covalently cross-linked (Glycyl lysine isopeptide (Lys-Gly) (interchain with G-Cter in SUMO2)). Thr68 bears the Phosphothreonine mark.

It belongs to the CENP-H/MCM16 family. As to quaternary structure, self-associates. Component of the CENPA-NAC complex, at least composed of CENPA, CENPC, CENPH, CENPM, CENPN, CENPT and CENPU. The CENPA-NAC complex interacts with the CENPA-CAD complex, composed of CENPI, CENPK, CENPL, CENPO, CENPP, CENPQ, CENPR and CENPS. Interacts directly with CENPK. Interacts with KIF2C and NDC80. Interacts with TRIM36.

It localises to the nucleus. The protein resides in the chromosome. The protein localises to the centromere. It is found in the kinetochore. In terms of biological role, component of the CENPA-NAC (nucleosome-associated) complex, a complex that plays a central role in assembly of kinetochore proteins, mitotic progression and chromosome segregation. The CENPA-NAC complex recruits the CENPA-CAD (nucleosome distal) complex and may be involved in incorporation of newly synthesized CENPA into centromeres. Required for chromosome congression and efficiently align the chromosomes on a metaphase plate. The sequence is that of Centromere protein H from Homo sapiens (Human).